A 319-amino-acid polypeptide reads, in one-letter code: Olfactory receptor 8U8 (319 aa).

Topologically, residues 1–28 (MAHINCTQATEFILVGLTDHQELKMPLF) are extracellular. Asn5 is a glycosylation site (N-linked (GlcNAc...) asparagine). A helical membrane pass occupies residues 29 to 49 (VLFLSIYLFTVVGNLGLILLI). Topologically, residues 50-56 (RADTSLN) are cytoplasmic. The chain crosses the membrane as a helical span at residues 57 to 77 (TPMYFFLSNLAFVDFCYSSVI). Residues 78-97 (TPKMLGNFLYKQNVISFDAC) are Extracellular-facing. A disulfide bridge links Cys97 with Cys179. Residues 98–118 (ATQLGCFLTFMVSESLLLASM) form a helical membrane-spanning segment. Residues 119 to 122 (AYDR) lie on the Cytoplasmic side of the membrane. The chain crosses the membrane as a helical span at residues 123–143 (YVAICNPLLYMVVMTPGICIQ). Residues 144–204 (LVAVPYSYSF…KQLWILACAG (61 aa)) are Extracellular-facing. The chain crosses the membrane as a helical span at residues 205–225 (ITFICSVLIVFVSYMFIIFAI). Residues 226–239 (LRMSSAEGRRKAFS) are Cytoplasmic-facing. Residues 240–260 (TCSSHMLAVTIFYGTLIFMYL) form a helical membrane-spanning segment. The Extracellular portion of the chain corresponds to 261–271 (QPSSSHSLDAD). Residues 272 to 292 (KMASVFYTVIIPMLNPLIYSL) traverse the membrane as a helical segment. The Cytoplasmic portion of the chain corresponds to 293–319 (RNKDVKDALKKVIINRNHAFIFLKLRK).

It belongs to the G-protein coupled receptor 1 family.

It is found in the cell membrane. Odorant receptor. This chain is Olfactory receptor 8U8 (OR8U8), found in Homo sapiens (Human).